Reading from the N-terminus, the 344-residue chain is Anthranilate phosphoribosyltransferase (344 aa).

5-phospho-alpha-D-ribose 1-diphosphate is bound by residues glycine 85, 88-89 (GD), threonine 93, 95-98 (NIST), 113-121 (KHGNRSVSS), and serine 125. An anthranilate-binding site is contributed by glycine 85. Residue serine 97 participates in Mg(2+) binding. Asparagine 116 contributes to the anthranilate binding site. Residue arginine 171 participates in anthranilate binding. Residues aspartate 229 and glutamate 230 each contribute to the Mg(2+) site.

The protein belongs to the anthranilate phosphoribosyltransferase family. As to quaternary structure, homodimer. It depends on Mg(2+) as a cofactor.

The enzyme catalyses N-(5-phospho-beta-D-ribosyl)anthranilate + diphosphate = 5-phospho-alpha-D-ribose 1-diphosphate + anthranilate. It functions in the pathway amino-acid biosynthesis; L-tryptophan biosynthesis; L-tryptophan from chorismate: step 2/5. In terms of biological role, catalyzes the transfer of the phosphoribosyl group of 5-phosphorylribose-1-pyrophosphate (PRPP) to anthranilate to yield N-(5'-phosphoribosyl)-anthranilate (PRA). The polypeptide is Anthranilate phosphoribosyltransferase (Shewanella amazonensis (strain ATCC BAA-1098 / SB2B)).